A 499-amino-acid chain; its full sequence is Phenylalanine--tRNA ligase alpha subunit (499 aa).

Residues Thr-342, 381–383 (QID), and Phe-422 contribute to the L-phenylalanine site. Position 424 (Glu-424) interacts with Mg(2+). Phe-447 is an L-phenylalanine binding site.

This sequence belongs to the class-II aminoacyl-tRNA synthetase family. Phe-tRNA synthetase alpha subunit type 2 subfamily. In terms of assembly, tetramer of two alpha and two beta subunits. The cofactor is Mg(2+).

The protein localises to the cytoplasm. It carries out the reaction tRNA(Phe) + L-phenylalanine + ATP = L-phenylalanyl-tRNA(Phe) + AMP + diphosphate + H(+). This Pyrococcus furiosus (strain ATCC 43587 / DSM 3638 / JCM 8422 / Vc1) protein is Phenylalanine--tRNA ligase alpha subunit.